Reading from the N-terminus, the 535-residue chain is Bifunctional purine biosynthesis protein PurH (535 aa).

One can recognise an MGS-like domain in the interval 1–145 (MAQTALISVS…KNWKDVGVLT (145 aa)).

The protein belongs to the PurH family.

The enzyme catalyses (6R)-10-formyltetrahydrofolate + 5-amino-1-(5-phospho-beta-D-ribosyl)imidazole-4-carboxamide = 5-formamido-1-(5-phospho-D-ribosyl)imidazole-4-carboxamide + (6S)-5,6,7,8-tetrahydrofolate. The catalysed reaction is IMP + H2O = 5-formamido-1-(5-phospho-D-ribosyl)imidazole-4-carboxamide. It functions in the pathway purine metabolism; IMP biosynthesis via de novo pathway; 5-formamido-1-(5-phospho-D-ribosyl)imidazole-4-carboxamide from 5-amino-1-(5-phospho-D-ribosyl)imidazole-4-carboxamide (10-formyl THF route): step 1/1. The protein operates within purine metabolism; IMP biosynthesis via de novo pathway; IMP from 5-formamido-1-(5-phospho-D-ribosyl)imidazole-4-carboxamide: step 1/1. This Variovorax paradoxus (strain S110) protein is Bifunctional purine biosynthesis protein PurH.